The primary structure comprises 796 residues: Cadherin-11 (796 aa).

The signal sequence occupies residues 1 to 24; that stretch reads MKENYCLQAALVCLSMLYHSQAFA. The propeptide occupies 25 to 53; sequence LERRSHLHPSFHGHHEKGKEGQVLQRSKR. Cadherin domains follow at residues 54–159, 160–268, 269–383, 384–486, and 487–612; these read GWVW…PPEF, LHEI…PPKF, PQSV…PPMF, LAPS…DNAP, and KFAA…YILN. The Extracellular portion of the chain corresponds to 54 to 617; it reads GWVWNQFFVI…AYILNAGLST (564 aa). N455 and N540 each carry an N-linked (GlcNAc...) asparagine glycan. Residues 618 to 640 traverse the membrane as a helical segment; that stretch reads GALIAILACIVILLVIVVLFVTL. The Cytoplasmic portion of the chain corresponds to 641 to 796; it reads RRQKKEPLIV…GSKDTFDDDS (156 aa). S788 carries the post-translational modification Phosphoserine. A Phosphothreonine modification is found at T791.

Interacts with PCDH8. As to expression, selectively expressed in osteoblastic cell lines, precursor cell lines of osteoblasts, and primary osteoblastic cells from calvaria, as well as in lung, testis, and brain tissues at low levels.

Its subcellular location is the cell membrane. Its function is as follows. Cadherins are calcium-dependent cell adhesion proteins. They preferentially interact with themselves in a homophilic manner in connecting cells; cadherins may thus contribute to the sorting of heterogeneous cell types. Required for proper focal adhesion assembly. Involved in the regulation of cell migration. The chain is Cadherin-11 (Cdh11) from Mus musculus (Mouse).